The sequence spans 206 residues: Small ribosomal subunit protein uS5 (206 aa).

A compositionally biased stretch (polar residues) spans 1 to 15; it reads MTDTPTKQETQSNKD. The tract at residues 1 to 50 is disordered; that stretch reads MTDTPTKQETQSNKDNVPGAIPVEQKKNNRNDRKRNRRGDSKNLERDSDW. Basic and acidic residues predominate over residues 38–50; it reads RGDSKNLERDSDW. Residues 50 to 113 form the S5 DRBM domain; that stretch reads WQERVVQIRR…SDGKKNLVRV (64 aa).

Belongs to the universal ribosomal protein uS5 family. In terms of assembly, part of the 30S ribosomal subunit. Contacts proteins S4 and S8.

In terms of biological role, with S4 and S12 plays an important role in translational accuracy. Functionally, located at the back of the 30S subunit body where it stabilizes the conformation of the head with respect to the body. This Prochlorococcus marinus (strain MIT 9215) protein is Small ribosomal subunit protein uS5.